The following is a 139-amino-acid chain: Small ribosomal subunit protein uS11 (139 aa).

Residues 118 to 139 (EDVTPIPHDGTRPKGGRRGRRV) form a disordered region.

Belongs to the universal ribosomal protein uS11 family. In terms of assembly, part of the 30S ribosomal subunit.

Located on the platform of the 30S subunit. The sequence is that of Small ribosomal subunit protein uS11 from Thermococcus sibiricus (strain DSM 12597 / MM 739).